Here is a 318-residue protein sequence, read N- to C-terminus: Thymidylate synthase (318 aa).

Residues Arg-25 and 180–181 (RR) each bind dUMP. Residue Cys-200 is the Nucleophile of the active site. DUMP is bound by residues 220 to 223 (RSGD), Asn-231, and 261 to 263 (HIY). (6R)-5,10-methylene-5,6,7,8-tetrahydrofolate is bound at residue Asp-223. Ala-317 contributes to the (6R)-5,10-methylene-5,6,7,8-tetrahydrofolate binding site.

The protein belongs to the thymidylate synthase family. Bacterial-type ThyA subfamily. As to quaternary structure, homodimer.

The protein resides in the cytoplasm. It catalyses the reaction dUMP + (6R)-5,10-methylene-5,6,7,8-tetrahydrofolate = 7,8-dihydrofolate + dTMP. It participates in pyrimidine metabolism; dTTP biosynthesis. In terms of biological role, catalyzes the reductive methylation of 2'-deoxyuridine-5'-monophosphate (dUMP) to 2'-deoxythymidine-5'-monophosphate (dTMP) while utilizing 5,10-methylenetetrahydrofolate (mTHF) as the methyl donor and reductant in the reaction, yielding dihydrofolate (DHF) as a by-product. This enzymatic reaction provides an intracellular de novo source of dTMP, an essential precursor for DNA biosynthesis. The polypeptide is Thymidylate synthase (Lactobacillus delbrueckii subsp. bulgaricus (strain ATCC BAA-365 / Lb-18)).